A 278-amino-acid polypeptide reads, in one-letter code: Large ribosomal subunit protein uL2 (278 aa).

The segment covering 212–221 has biased composition (basic residues); sequence NRWLGKRPHN. The segment at 212 to 278 is disordered; it reads NRWLGKRPHN…ILSSRHNRKK (67 aa).

The protein belongs to the universal ribosomal protein uL2 family. Part of the 50S ribosomal subunit. Forms a bridge to the 30S subunit in the 70S ribosome.

One of the primary rRNA binding proteins. Required for association of the 30S and 50S subunits to form the 70S ribosome, for tRNA binding and peptide bond formation. It has been suggested to have peptidyltransferase activity; this is somewhat controversial. Makes several contacts with the 16S rRNA in the 70S ribosome. This chain is Large ribosomal subunit protein uL2, found in Methylorubrum populi (strain ATCC BAA-705 / NCIMB 13946 / BJ001) (Methylobacterium populi).